The chain runs to 44 residues: U17-ctenitoxin-Co1a (44 aa).

4 disulfides stabilise this stretch: cysteine 3-cysteine 20, cysteine 10-cysteine 26, cysteine 19-cysteine 40, and cysteine 28-cysteine 38.

In terms of tissue distribution, expressed by the venom gland.

Its subcellular location is the secreted. Its function is as follows. Omega-agatoxins are antagonists of voltage-sensitive calcium channels (Cav). Toxic to mice by intracerebroventricular injection. The sequence is that of U17-ctenitoxin-Co1a from Ctenus ornatus (Brazilian spider).